Reading from the N-terminus, the 126-residue chain is Holo-[acyl-carrier-protein] synthase (126 aa).

Residues aspartate 9 and glutamate 58 each contribute to the Mg(2+) site.

The protein belongs to the P-Pant transferase superfamily. AcpS family. It depends on Mg(2+) as a cofactor.

It localises to the cytoplasm. It carries out the reaction apo-[ACP] + CoA = holo-[ACP] + adenosine 3',5'-bisphosphate + H(+). Transfers the 4'-phosphopantetheine moiety from coenzyme A to a Ser of acyl-carrier-protein. The chain is Holo-[acyl-carrier-protein] synthase from Vibrio campbellii (strain ATCC BAA-1116).